Here is a 419-residue protein sequence, read N- to C-terminus: MRCLLVGGAVRDQLLGRPVGDRDWVVVGATPEQMVAAGYLPVGRDFPVFLHPRTHEEYALARTERKTAPGYHGFVFHTGADVSLDDDLARRDLTINAMALDEAGTLIDPWGGRRDLAHKCLRHVGAAFAEDPVRILRLARFAARLGDFSVAPETLALCRRMVEAGEVDALVPERVWQELSRGLMEARPSRMFEVLRDCGALARLLPEVERLFGVPQRADYHPEVDTGVHLMMVLDTAAQRGVSLPVRYACLGHDLGKGTTPAHILPRHIGHEGRSAALLAPMSARLKVPAACHELADLVAREHSNVHGSGNFDAAALVRLFDRCDAWRRPERFELALQACECDARGRLGFEQAHYPQAPRLRQALAAARGIDAAAVMASARARGLNGPALGRALHEARIEAVASDPACQRPADQAQQNG.

Gly8 and Arg11 together coordinate ATP. The CTP site is built by Gly8 and Arg11. The Mg(2+) site is built by Asp21 and Asp23. Arg91, Arg137, and Arg140 together coordinate ATP. CTP contacts are provided by Arg91, Arg137, and Arg140. Positions 226–327 constitute an HD domain; sequence TGVHLMMVLD…VRLFDRCDAW (102 aa).

Belongs to the tRNA nucleotidyltransferase/poly(A) polymerase family. Bacterial CCA-adding enzyme type 1 subfamily. As to quaternary structure, monomer. Can also form homodimers and oligomers. Mg(2+) is required as a cofactor. Requires Ni(2+) as cofactor.

It catalyses the reaction a tRNA precursor + 2 CTP + ATP = a tRNA with a 3' CCA end + 3 diphosphate. The enzyme catalyses a tRNA with a 3' CCA end + 2 CTP + ATP = a tRNA with a 3' CCACCA end + 3 diphosphate. In terms of biological role, catalyzes the addition and repair of the essential 3'-terminal CCA sequence in tRNAs without using a nucleic acid template. Adds these three nucleotides in the order of C, C, and A to the tRNA nucleotide-73, using CTP and ATP as substrates and producing inorganic pyrophosphate. tRNA 3'-terminal CCA addition is required both for tRNA processing and repair. Also involved in tRNA surveillance by mediating tandem CCA addition to generate a CCACCA at the 3' terminus of unstable tRNAs. While stable tRNAs receive only 3'-terminal CCA, unstable tRNAs are marked with CCACCA and rapidly degraded. The polypeptide is Multifunctional CCA protein (Leptothrix cholodnii (strain ATCC 51168 / LMG 8142 / SP-6) (Leptothrix discophora (strain SP-6))).